Reading from the N-terminus, the 290-residue chain is MTMNSSIIKNEQAYLDLLRLVLNEGTEKGDRTGTGTLSHFGAQLRFNLADGFPLLTTKKVHLKSITYELLWFLNGSTHVDYLQQNGVRIWNEWATSEQTARFNRPAGDLGPIYGHQWRNYGATTTADGQYNSDGVDQIAQVVEQIKTNPNSRRLIVSGWNPGEADQVALPPCHTLFQFFVADNKLSCQLYQRSADLFLGVPFNIASYAMLTHMVAQVCNLEVGEFIWTGGDCHIYQNHREQVELQLTRSLYTLPTLALNPNVKDIFAFNYEDISVDGYESHPAIKAQVAV.

Arg-31 is a dUMP binding site. His-61 is a binding site for (6R)-5,10-methylene-5,6,7,8-tetrahydrofolate. Arg-152–Arg-153 serves as a coordination point for dUMP. The Nucleophile role is filled by Cys-172. Residues Arg-192–Asp-195, Asn-203, and His-233–Tyr-235 each bind dUMP. Residue Asp-195 participates in (6R)-5,10-methylene-5,6,7,8-tetrahydrofolate binding. Ala-289 provides a ligand contact to (6R)-5,10-methylene-5,6,7,8-tetrahydrofolate.

This sequence belongs to the thymidylate synthase family. Bacterial-type ThyA subfamily. As to quaternary structure, homodimer.

Its subcellular location is the cytoplasm. It carries out the reaction dUMP + (6R)-5,10-methylene-5,6,7,8-tetrahydrofolate = 7,8-dihydrofolate + dTMP. Its pathway is pyrimidine metabolism; dTTP biosynthesis. Catalyzes the reductive methylation of 2'-deoxyuridine-5'-monophosphate (dUMP) to 2'-deoxythymidine-5'-monophosphate (dTMP) while utilizing 5,10-methylenetetrahydrofolate (mTHF) as the methyl donor and reductant in the reaction, yielding dihydrofolate (DHF) as a by-product. This enzymatic reaction provides an intracellular de novo source of dTMP, an essential precursor for DNA biosynthesis. The sequence is that of Thymidylate synthase from Psychrobacter cryohalolentis (strain ATCC BAA-1226 / DSM 17306 / VKM B-2378 / K5).